Consider the following 308-residue polypeptide: MSTTFSNTLLSDILRQVRPLIGQGKVANYIPALAEVPADNLAIAICTIDGQIFHAGDAEKRFSIQSISKILSLTLAMTRYQEQEIWQRVGQEPSGQPFNSLVQLELEKGKPRNPFVNAGALIVCDMLQSRLSAPKQRMLEVVRKLAGCPDICYDSKVARSEMEHSHRNAAIAYLMKSFGNFDNDVLAVLQTYFHYCALKMNCIELAKCFIYLANQGSTIGSEQQILSPRQARQINALMMTCGMYDGSGEFAFRIGMPGKSGVGGGIVCVVPGEFTVTVWSPELDRSGNSLAGCAALELLADRVGRSVF.

Substrate is bound by residues Ser66, Asn117, Glu161, Asn168, Tyr192, Tyr244, and Val262.

The protein belongs to the glutaminase family. Homotetramer.

It carries out the reaction L-glutamine + H2O = L-glutamate + NH4(+). The chain is Glutaminase from Photorhabdus laumondii subsp. laumondii (strain DSM 15139 / CIP 105565 / TT01) (Photorhabdus luminescens subsp. laumondii).